Consider the following 404-residue polypeptide: Putative glutamate--cysteine ligase 2 (404 aa).

The tract at residues 377 to 404 is disordered; that stretch reads GPAGKRAHEGGRSFRPAAGAPMSIRGQE.

This sequence belongs to the glutamate--cysteine ligase type 2 family. YbdK subfamily.

It catalyses the reaction L-cysteine + L-glutamate + ATP = gamma-L-glutamyl-L-cysteine + ADP + phosphate + H(+). In terms of biological role, ATP-dependent carboxylate-amine ligase which exhibits weak glutamate--cysteine ligase activity. The chain is Putative glutamate--cysteine ligase 2 from Pseudomonas aeruginosa (strain UCBPP-PA14).